Here is a 94-residue protein sequence, read N- to C-terminus: Protein LURE 1.1 (94 aa).

An N-terminal signal peptide occupies residues 1–19 (MKLIFIFLTLLIFVSSCTS). 3 disulfide bridges follow: C58-C75, C61-C82, and C65-C84. The tract at residues 67-87 (RRDRYIRTCSFERKLCRCSYS) is PRK6 binding.

Belongs to the DEFL family. As to quaternary structure, binds to PRK6 LRRs. As to expression, expressed in the pistil. Detected exclusively in the synergid cells.

Its subcellular location is the secreted. Functionally, pollen tube attractants guiding pollen tubes to the ovular micropyle. The sequence is that of Protein LURE 1.1 from Arabidopsis thaliana (Mouse-ear cress).